The following is a 359-amino-acid chain: Peptide chain release factor 1 (359 aa).

Gln238 carries the N5-methylglutamine modification.

Belongs to the prokaryotic/mitochondrial release factor family. In terms of processing, methylated by PrmC. Methylation increases the termination efficiency of RF1.

The protein resides in the cytoplasm. Its function is as follows. Peptide chain release factor 1 directs the termination of translation in response to the peptide chain termination codons UAG and UAA. This chain is Peptide chain release factor 1, found in Rhodococcus jostii (strain RHA1).